The sequence spans 479 residues: Phosphoglycerate kinase, glycosomal (479 aa).

Positions 23, 24, 25, 26, 39, 61, 62, 64, 65, 132, 168, and 169 each coordinate (2R)-3-phosphoglycerate. Residues glycine 214 and alanine 215 each contribute to the ADP site. Position 214 (glycine 214) interacts with CDP. The AMP site is built by alanine 215 and lysine 216. Residue alanine 215 coordinates ATP. Alanine 215 is a binding site for Mg(2+). A (2R)-3-phosphoglycerate-binding site is contributed by lysine 216. Aspartate 219 contributes to the CDP binding site. Residue aspartate 219 participates in Mg(2+) binding. ADP-binding residues include lysine 220 and glycine 238. Lysine 220 lines the AMP pocket. Residue lysine 220 coordinates ATP. Glycine 238 contacts CDP. AMP-binding residues include alanine 239 and alanine 311. ATP is bound by residues alanine 239 and alanine 311. 2 residues coordinate ADP: alanine 311 and asparagine 335. CDP is bound by residues glycine 336 and phenylalanine 341. The ADP site is built by phenylalanine 341, glutamate 342, aspartate 374, and serine 375. Residue glutamate 342 coordinates AMP. Positions 342, 374, and 375 each coordinate ATP. Residue aspartate 374 participates in Mg(2+) binding.

The protein belongs to the phosphoglycerate kinase family. As to quaternary structure, monomer. Mg(2+) is required as a cofactor.

It is found in the glycosome. It catalyses the reaction (2R)-3-phosphoglycerate + ATP = (2R)-3-phospho-glyceroyl phosphate + ADP. Its pathway is carbohydrate degradation; glycolysis; pyruvate from D-glyceraldehyde 3-phosphate: step 2/5. The chain is Phosphoglycerate kinase, glycosomal (PGKC) from Leishmania major.